The chain runs to 294 residues: Bifunctional protein FolD (294 aa).

Residues 175–177 (GVS) and Ile-243 contribute to the NADP(+) site.

The protein belongs to the tetrahydrofolate dehydrogenase/cyclohydrolase family. Homodimer.

The enzyme catalyses (6R)-5,10-methylene-5,6,7,8-tetrahydrofolate + NADP(+) = (6R)-5,10-methenyltetrahydrofolate + NADPH. It carries out the reaction (6R)-5,10-methenyltetrahydrofolate + H2O = (6R)-10-formyltetrahydrofolate + H(+). It functions in the pathway one-carbon metabolism; tetrahydrofolate interconversion. Functionally, catalyzes the oxidation of 5,10-methylenetetrahydrofolate to 5,10-methenyltetrahydrofolate and then the hydrolysis of 5,10-methenyltetrahydrofolate to 10-formyltetrahydrofolate. The polypeptide is Bifunctional protein FolD (Xanthomonas campestris pv. campestris (strain 8004)).